The following is a 335-amino-acid chain: Peflin (335 aa).

Over residues 23–37 (AMEETRREFEKEKQR) the composition is skewed to basic and acidic residues. The disordered stretch occupies residues 23-92 (AMEETRREFE…SPRHTKTPVD (70 aa)). Over residues 43-53 (VTQAQTPNTRV) the composition is skewed to polar residues. 5 consecutive EF-hand domains span residues 144 to 192 (KVAP…DDNS), 198 to 223 (SVDA…IALY), 224 to 259 (KRVK…LGYL), 260 to 300 (IPFE…LMRL), and 301 to 332 (TKLF…LGRF). Ca(2+)-binding residues include Asp-170, Arg-176, and Glu-181. Ca(2+)-binding residues include Asp-237, Asn-239, Ser-241, Thr-243, and Glu-248.

In terms of assembly, homodimer.

The protein resides in the cytoplasm. The protein localises to the nucleus. It is found in the bud tip. Its subcellular location is the bud neck. Calcium-binding protein that is required for polar bud growth and cell wall abscission. Can also bind zinc ions. The sequence is that of Peflin (PEF1) from Saccharomyces cerevisiae (strain ATCC 204508 / S288c) (Baker's yeast).